Consider the following 204-residue polypeptide: Peptide deformylase (204 aa).

Positions 131 and 174 each coordinate Fe cation. Residue E175 is part of the active site. H178 contacts Fe cation.

It belongs to the polypeptide deformylase family. The cofactor is Fe(2+).

It catalyses the reaction N-terminal N-formyl-L-methionyl-[peptide] + H2O = N-terminal L-methionyl-[peptide] + formate. Removes the formyl group from the N-terminal Met of newly synthesized proteins. Requires at least a dipeptide for an efficient rate of reaction. N-terminal L-methionine is a prerequisite for activity but the enzyme has broad specificity at other positions. The protein is Peptide deformylase of Streptococcus pyogenes serotype M49 (strain NZ131).